Here is a 349-residue protein sequence, read N- to C-terminus: Fe(3+) ions import ATP-binding protein FbpC (349 aa).

An ABC transporter domain is found at 7–237 (LVLKNVTKAF…PNSLFLANFM (231 aa)). 39 to 46 (GPSGCGKT) contacts ATP.

It belongs to the ABC transporter superfamily. Fe(3+) ion importer (TC 3.A.1.10) family. In terms of assembly, the complex is composed of two ATP-binding proteins (FbpC), two transmembrane proteins (FbpB) and a solute-binding protein (FbpA).

It localises to the cell inner membrane. It carries out the reaction Fe(3+)(out) + ATP + H2O = Fe(3+)(in) + ADP + phosphate + H(+). Functionally, part of the ABC transporter complex FbpABC involved in Fe(3+) ions import. Responsible for energy coupling to the transport system. The chain is Fe(3+) ions import ATP-binding protein FbpC from Pasteurella multocida (strain Pm70).